The primary structure comprises 269 residues: Glutamate racemase (269 aa).

Substrate contacts are provided by residues 11–12 (DS) and 43–44 (YG). Cys-74 (proton donor/acceptor) is an active-site residue. 75–76 (NT) lines the substrate pocket. Catalysis depends on Cys-185, which acts as the Proton donor/acceptor. Residue 186–187 (TH) participates in substrate binding.

Belongs to the aspartate/glutamate racemases family.

The catalysed reaction is L-glutamate = D-glutamate. Its pathway is cell wall biogenesis; peptidoglycan biosynthesis. In terms of biological role, provides the (R)-glutamate required for cell wall biosynthesis. The protein is Glutamate racemase of Bacillus cereus (strain ATCC 10987 / NRS 248).